We begin with the raw amino-acid sequence, 554 residues long: Thermosome subunit alpha (554 aa).

The interval 530 to 554 (PKKKEKKGKTGEEEEEEGGGSKFEF) is disordered.

The protein belongs to the TCP-1 chaperonin family. Forms a Heterooligomeric complex of two stacked eight-membered rings.

Molecular chaperone; binds unfolded polypeptides in vitro, and has a weak ATPase activity. The chain is Thermosome subunit alpha (thsA) from Aeropyrum pernix (strain ATCC 700893 / DSM 11879 / JCM 9820 / NBRC 100138 / K1).